A 156-amino-acid polypeptide reads, in one-letter code: Putative pre-16S rRNA nuclease (156 aa).

Belongs to the YqgF nuclease family.

The protein resides in the cytoplasm. In terms of biological role, could be a nuclease involved in processing of the 5'-end of pre-16S rRNA. The sequence is that of Putative pre-16S rRNA nuclease from Nocardioides sp. (strain ATCC BAA-499 / JS614).